A 451-amino-acid polypeptide reads, in one-letter code: Kynureninase (451 aa).

Residues leucine 131, serine 132, 159–162 (FPSD), serine 215, aspartate 244, histidine 247, and tyrosine 269 each bind pyridoxal 5'-phosphate. Lysine 270 carries the N6-(pyridoxal phosphate)lysine modification. Residues tryptophan 303 and asparagine 331 each coordinate pyridoxal 5'-phosphate.

This sequence belongs to the kynureninase family. As to quaternary structure, homodimer. Requires pyridoxal 5'-phosphate as cofactor.

It localises to the cytoplasm. It carries out the reaction L-kynurenine + H2O = anthranilate + L-alanine + H(+). The catalysed reaction is 3-hydroxy-L-kynurenine + H2O = 3-hydroxyanthranilate + L-alanine + H(+). It functions in the pathway amino-acid degradation; L-kynurenine degradation; L-alanine and anthranilate from L-kynurenine: step 1/1. The protein operates within cofactor biosynthesis; NAD(+) biosynthesis; quinolinate from L-kynurenine: step 2/3. Its function is as follows. Catalyzes the cleavage of L-kynurenine (L-Kyn) and L-3-hydroxykynurenine (L-3OHKyn) into anthranilic acid (AA) and 3-hydroxyanthranilic acid (3-OHAA), respectively. This chain is Kynureninase, found in Dictyostelium discoideum (Social amoeba).